Here is a 366-residue protein sequence, read N- to C-terminus: Leucine-rich repeat-containing protein 58 (366 aa).

Residue S19 is modified to Phosphoserine. LRR repeat units lie at residues 40-61 (ALLR…LGGG), 64-86 (HLQL…LTLS), 87-108 (GLRT…PKGL), 116-138 (SLQV…LELR), 139-161 (ALQT…ENLR), 162-184 (SLEC…ANLP), 185-206 (SLNY…LSQL), 208-229 (SLRS…ILNL), and 231-251 (HLEE…RDLT). The segment covering 337-346 (ASHSSTSQSE) has biased composition (low complexity). Residues 337–356 (ASHSSTSQSESDSEDEASVA) are disordered.

The sequence is that of Leucine-rich repeat-containing protein 58 (Lrrc58) from Mus musculus (Mouse).